The following is a 127-amino-acid chain: Major sperm protein 49 (127 aa).

At alanine 2 the chain carries N-acetylalanine. An MSP domain is found at 9–126 (DIQTQPGTKI…RRKNLPIEYN (118 aa)).

In terms of tissue distribution, sperm.

It localises to the cell projection. The protein resides in the pseudopodium. The protein localises to the cytoplasm. It is found in the cytoskeleton. In terms of biological role, central component in molecular interactions underlying sperm crawling. Forms an extensive filament system that extends from sperm villipoda, along the leading edge of the pseudopod. The sequence is that of Major sperm protein 49 (msp-49) from Caenorhabditis elegans.